A 321-amino-acid polypeptide reads, in one-letter code: MNLKVVYFGTPTFAATVLQDLLHHKIQITAVVTRVDKPQKRSAQLIPSPVKTIALTHGLPLLQPSKASDPQFIEELRAFNADVFIVVAYGAILRQIVLDIPRYGCYNLHAGLLPAYRGAAPIQRCIMEGATESGNTVIRMDAGMDTGDMANITRVPIGPDMTSGELADALASQGAEVLIKTLQQIESGQLQLVSQDAALATIAPKLSKEEGQVPWDKPAKEAYAHIRGVTPAPGAWTLFSFSEKAPKRLMIRKASLLAEAGRYGAPGTVVVTDRQELAIACSEGAICLHEVQVEGKGSTNSKSFLNGYPAKKLKIVFTLNN.

Residue 111 to 114 coordinates (6S)-5,6,7,8-tetrahydrofolate; the sequence is GLLP.

This sequence belongs to the Fmt family.

It carries out the reaction L-methionyl-tRNA(fMet) + (6R)-10-formyltetrahydrofolate = N-formyl-L-methionyl-tRNA(fMet) + (6S)-5,6,7,8-tetrahydrofolate + H(+). Functionally, attaches a formyl group to the free amino group of methionyl-tRNA(fMet). The formyl group appears to play a dual role in the initiator identity of N-formylmethionyl-tRNA by promoting its recognition by IF2 and preventing the misappropriation of this tRNA by the elongation apparatus. The polypeptide is Methionyl-tRNA formyltransferase (Chlamydia pneumoniae (Chlamydophila pneumoniae)).